The sequence spans 355 residues: (R,S)-reticuline 7-O-methyltransferase (355 aa).

S-adenosyl-L-methionine contacts are provided by residues 197 to 200 (VGGG), D221, 221 to 222 (DL), 241 to 242 (DM), and K255. The active-site Proton acceptor is the H259.

It belongs to the class I-like SAM-binding methyltransferase superfamily. Cation-independent O-methyltransferase family. In terms of assembly, homodimer. As to expression, expressed in capsules, buds and stems, and at lower levels in leaves. Localized to parenchyma cells within the vascular bundle, but only to those cells distal to laticifers. In roots, found in the pericycle within the stele.

The catalysed reaction is (S)-reticuline + S-adenosyl-L-methionine = (S)-laudanine + S-adenosyl-L-homocysteine + H(+). It catalyses the reaction (R)-reticuline + S-adenosyl-L-methionine = (R)-laudanine + S-adenosyl-L-homocysteine + H(+). Functionally, catalyzes the transfer of a methyl group to reticuline to form laudanine. Methylates the simple catechols guaiacol and isovanillic acid as well as the tetrahydrobenzylisoquinolines (R)-reticuline, (S)-reticuline, (R,S)-orientaline, (R)-protosinomenine and (R,S)-isoorientaline. Involved in the production of laudanine. This is (R,S)-reticuline 7-O-methyltransferase from Papaver somniferum (Opium poppy).